The chain runs to 616 residues: Chaperone protein HscA (616 aa).

The protein belongs to the heat shock protein 70 family.

Its function is as follows. Chaperone involved in the maturation of iron-sulfur cluster-containing proteins. Has a low intrinsic ATPase activity which is markedly stimulated by HscB. Involved in the maturation of IscU. In Salmonella newport (strain SL254), this protein is Chaperone protein HscA.